The following is a 513-amino-acid chain: 2,3-bisphosphoglycerate-independent phosphoglycerate mutase (513 aa).

Positions 12 and 62 each coordinate Mn(2+). The active-site Phosphoserine intermediate is Ser-62. Substrate is bound by residues His-123, 153–154 (RD), Arg-185, Arg-191, 260–263 (RPDR), and Lys-333. Mn(2+) contacts are provided by Asp-400, His-404, Asp-441, His-442, and His-460.

This sequence belongs to the BPG-independent phosphoglycerate mutase family. Monomer. Mn(2+) is required as a cofactor.

The enzyme catalyses (2R)-2-phosphoglycerate = (2R)-3-phosphoglycerate. It participates in carbohydrate degradation; glycolysis; pyruvate from D-glyceraldehyde 3-phosphate: step 3/5. In terms of biological role, catalyzes the interconversion of 2-phosphoglycerate and 3-phosphoglycerate. In Clostridium tetani (strain Massachusetts / E88), this protein is 2,3-bisphosphoglycerate-independent phosphoglycerate mutase.